Reading from the N-terminus, the 429-residue chain is C4-dicarboxylate transport protein (429 aa).

8 helical membrane-spanning segments follow: residues 9–29 (VLYV…HYYP), 45–65 (LIKM…IAGM), 79–99 (LLYF…ATHI), 149–169 (GEIL…AHLG), 185–205 (VLFG…FGAM), 223–243 (LIGT…GAIA), 308–328 (IYMT…LTWM), and 356–376 (AATL…ILGI).

This sequence belongs to the dicarboxylate/amino acid:cation symporter (DAACS) (TC 2.A.23) family.

Its subcellular location is the cell inner membrane. Its function is as follows. Responsible for the transport of dicarboxylates such as succinate, fumarate, and malate from the periplasm across the membrane. This chain is C4-dicarboxylate transport protein, found in Burkholderia multivorans (strain ATCC 17616 / 249).